Reading from the N-terminus, the 218-residue chain is MPVTLGYWDIRGLAHAIRLLLEYTDTSYEEKKYTMGDAPNFDRSQWLNEKFKLGLDFPNLPYLIDGSHKITQSNAILRYIARKHDLCGETEEERIQLDILENQAMDTRMQLAMVCYSPDFEKRKPEYLEGLPEKMKLYSEFLGKRSWFAGDKITYVDFLIYDVLDQHRIFAPKCLDAFPNLKDFLARFEGLKKISDYMKSSRFSCKQIFAKMAVWNSK.

Residues 2–88 (PVTLGYWDIR…YIARKHDLCG (87 aa)) form the GST N-terminal domain. Glutathione-binding positions include 7–8 (YW), 46–50 (WLNEK), 59–60 (NL), and 72–73 (QS). Residues 90 to 208 (TEEERIQLDI…KSSRFSCKQI (119 aa)) form the GST C-terminal domain. Residue Y116 participates in substrate binding.

This sequence belongs to the GST superfamily. Mu family. In terms of assembly, homodimer.

The protein localises to the cytoplasm. The catalysed reaction is RX + glutathione = an S-substituted glutathione + a halide anion + H(+). Its function is as follows. Conjugation of reduced glutathione to a wide number of exogenous and endogenous hydrophobic electrophiles. The polypeptide is Glutathione S-transferase (Mesocricetus auratus (Golden hamster)).